The chain runs to 363 residues: MPHWITHPSELTDRLQAARPARIGLDTEFIRERTYWPQLALVQMAIGEEILLIDPLIPGMNAALKEWLTATDIVKVMHSASEDLVTFKCACGVLPRPLFDTQIAAALAGVGGGMGYQKLVQEVTGTLLTKGETRSDWMRRPLSPSQLEYAADDVRYLFAIHDELTRRLTEQNRLGWLAEDAERLLATVEHDDGERWPHVSLRTAQFLEPAAQRRLLRLLRWRDLQARQSDRPRSWILDNEVASQLARFPPADLDALLQQFDKFPKAPRKLANAVWDALNTPLPDEEHAPLAQAATDGNKAVLKRLQDTVAQRSHELGLPDGLLASRRHLETLIEQRSWPAALGQWRRAVLEAQVMPLLEASEA.

In terms of domain architecture, 3'-5' exonuclease spans isoleucine 5–leucine 168. The region spanning glutamate 208 to alanine 288 is the HRDC domain.

It belongs to the RNase D family. The cofactor is a divalent metal cation.

It localises to the cytoplasm. It catalyses the reaction Exonucleolytic cleavage that removes extra residues from the 3'-terminus of tRNA to produce 5'-mononucleotides.. Functionally, exonuclease involved in the 3' processing of various precursor tRNAs. Initiates hydrolysis at the 3'-terminus of an RNA molecule and releases 5'-mononucleotides. The polypeptide is Ribonuclease D (Xanthomonas oryzae pv. oryzae (strain KACC10331 / KXO85)).